We begin with the raw amino-acid sequence, 80 residues long: MGLKMSSNALLLSLFLLLLCLFSEIGGSETTHWKIVEEPVRGQIATPPSLTCGGQRLGGPQPRLSPCPRPRPRPRPRTGS.

The first 27 residues, 1-27 (MGLKMSSNALLLSLFLLLLCLFSEIGG), serve as a signal peptide directing secretion. The disordered stretch occupies residues 44 to 80 (IATPPSLTCGGQRLGGPQPRLSPCPRPRPRPRPRTGS). The short motif at 62-80 (PRLSPCPRPRPRPRPRTGS) is the SCOOP motif element. Residues 70 to 80 (PRPRPRPRTGS) show a composition bias toward basic residues.

This sequence belongs to the serine rich endogenous peptide (SCOOP) phytocytokine family. In terms of assembly, interacts with MIK2 (via extracellular leucine-rich repeat domain); this interaction triggers the formation of complex between MIK2 and the BAK1/SERK3 and SERK4 coreceptors, and subsequent BAK1 activation by phosphorylation. Mostly expressed in leaves, and, to a lower extent, in roots, stems, siliques, seeds and flowers.

Its subcellular location is the cell membrane. It is found in the secreted. It localises to the extracellular space. The protein localises to the apoplast. The protein resides in the endoplasmic reticulum. Its subcellular location is the golgi apparatus. In terms of biological role, brassicaceae-specific phytocytokine (plant endogenous peptide released into the apoplast) perceived by MIK2 in a BAK1/SERK3 and SERK4 coreceptors-dependent manner, that modulates various physiological and antimicrobial processes including growth prevention and reactive oxygen species (ROS) response regulation. This Arabidopsis thaliana (Mouse-ear cress) protein is Secreted transmembrane peptide 3.